We begin with the raw amino-acid sequence, 368 residues long: Cell division protein FtsZ 1 (368 aa).

GTP-binding positions include 52 to 56, 139 to 141, E170, R174, and D217; these read GGGCN and GTG.

The protein belongs to the FtsZ family. Homodimer. Polymerizes to form a dynamic ring structure in a strictly GTP-dependent manner. Interacts directly with several other division proteins.

It is found in the cytoplasm. Functionally, essential cell division protein that forms a contractile ring structure (Z ring) at the future cell division site. The regulation of the ring assembly controls the timing and the location of cell division. One of the functions of the FtsZ ring is to recruit other cell division proteins to the septum to produce a new cell wall between the dividing cells. Binds GTP and shows GTPase activity. The protein is Cell division protein FtsZ 1 of Archaeoglobus fulgidus (strain ATCC 49558 / DSM 4304 / JCM 9628 / NBRC 100126 / VC-16).